Reading from the N-terminus, the 443-residue chain is Threonine/serine transporter TdcC (443 aa).

The next 11 membrane-spanning stretches (helical) occupy residues T22–I42, A44–F64, G97–V117, F140–M160, V163–I183, I207–I227, A259–S279, A319–L339, I366–L386, I389–I409, and E423–F443.

The protein belongs to the amino acid/polyamine transporter 2 family. SdaC/TdcC subfamily.

It localises to the cell inner membrane. It carries out the reaction L-threonine(in) + H(+)(in) = L-threonine(out) + H(+)(out). The catalysed reaction is L-serine(in) + H(+)(in) = L-serine(out) + H(+)(out). In terms of biological role, involved in the import of threonine and serine into the cell, with the concomitant import of a proton (symport system). This Enterobacter sp. (strain 638) protein is Threonine/serine transporter TdcC.